A 259-amino-acid polypeptide reads, in one-letter code: HTH-type transcriptional regulator Rv1719 (259 aa).

Residues Ile13–Pro75 enclose the HTH iclR-type domain. The H-T-H motif DNA-binding region spans Gln35–Asn54. Residues Val88–Lys259 enclose the IclR-ED domain.

Homodimer.

Binds to the upstream region of Rv1714 and probably modulates the expression of the downstream gene(s). This Mycobacterium tuberculosis (strain ATCC 25618 / H37Rv) protein is HTH-type transcriptional regulator Rv1719.